The sequence spans 289 residues: Thiazole synthase (289 aa).

The active-site Schiff-base intermediate with DXP is Lys-132. 1-deoxy-D-xylulose 5-phosphate-binding positions include Gly-193, 219–220 (AG), and 241–242 (NT).

The protein belongs to the ThiG family. In terms of assembly, homotetramer. Forms heterodimers with either ThiH or ThiS.

The protein resides in the cytoplasm. The catalysed reaction is [ThiS sulfur-carrier protein]-C-terminal-Gly-aminoethanethioate + 2-iminoacetate + 1-deoxy-D-xylulose 5-phosphate = [ThiS sulfur-carrier protein]-C-terminal Gly-Gly + 2-[(2R,5Z)-2-carboxy-4-methylthiazol-5(2H)-ylidene]ethyl phosphate + 2 H2O + H(+). Its pathway is cofactor biosynthesis; thiamine diphosphate biosynthesis. In terms of biological role, catalyzes the rearrangement of 1-deoxy-D-xylulose 5-phosphate (DXP) to produce the thiazole phosphate moiety of thiamine. Sulfur is provided by the thiocarboxylate moiety of the carrier protein ThiS. In vitro, sulfur can be provided by H(2)S. This is Thiazole synthase from Rhodospirillum rubrum (strain ATCC 11170 / ATH 1.1.1 / DSM 467 / LMG 4362 / NCIMB 8255 / S1).